A 126-amino-acid polypeptide reads, in one-letter code: UPF0102 protein PMT_0624 (126 aa).

Belongs to the UPF0102 family.

The chain is UPF0102 protein PMT_0624 from Prochlorococcus marinus (strain MIT 9313).